Reading from the N-terminus, the 353-residue chain is DNA integrity scanning protein DisA (353 aa).

Positions 6–144 (DKELMNILKI…GGIKYVLRDS (139 aa)) constitute a DAC domain. Residues Gly73, Leu91, and 104-108 (TRHRT) each bind ATP.

Belongs to the DisA family. In terms of assembly, homooctamer. Mg(2+) serves as cofactor.

It carries out the reaction 2 ATP = 3',3'-c-di-AMP + 2 diphosphate. Participates in a DNA-damage check-point that is active prior to asymmetric division when DNA is damaged. DisA forms globular foci that rapidly scan along the chromosomes during sporulation, searching for lesions. When a lesion is present, DisA pauses at the lesion site. This triggers a cellular response that culminates in a temporary block in sporulation initiation. In terms of biological role, also has diadenylate cyclase activity, catalyzing the condensation of 2 ATP molecules into cyclic di-AMP (c-di-AMP). c-di-AMP acts as a signaling molecule that couples DNA integrity with progression of sporulation. The rise in c-di-AMP level generated by DisA while scanning the chromosome, operates as a positive signal that advances sporulation; upon encountering a lesion, the DisA focus arrests at the damaged site and halts c-di-AMP synthesis. In Clostridium botulinum (strain Loch Maree / Type A3), this protein is DNA integrity scanning protein DisA.